Here is a 550-residue protein sequence, read N- to C-terminus: Hydroxylamine reductase (550 aa).

C4, C7, C19, and C26 together coordinate [2Fe-2S] cluster. Residues H249, E273, C317, C405, C433, C458, E492, and K494 each coordinate hybrid [4Fe-2O-2S] cluster. C405 carries the post-translational modification Cysteine persulfide.

The protein belongs to the HCP family. Requires [2Fe-2S] cluster as cofactor. The cofactor is hybrid [4Fe-2O-2S] cluster.

Its subcellular location is the cytoplasm. The catalysed reaction is A + NH4(+) + H2O = hydroxylamine + AH2 + H(+). Its function is as follows. Catalyzes the reduction of hydroxylamine to form NH(3) and H(2)O. The polypeptide is Hydroxylamine reductase (Aeromonas salmonicida (strain A449)).